Here is a 76-residue protein sequence, read N- to C-terminus: Small proline-rich protein 2F (76 aa).

Repeat copies occupy residues 21 to 29, 30 to 38, and 39 to 47. Positions 21–47 are 3 X 9 AA approximate tandem repeats; it reads PKCPEPCSPSVCPEPCPPPKCPEPCPE. The interval 53–76 is disordered; that stretch reads SFQQKCPPVQPPPPCQQKCPPKSK.

It belongs to the cornifin (SPRR) family. In terms of tissue distribution, expressed in uterus.

It is found in the cytoplasm. Functionally, cross-linked envelope protein of keratinocytes. It is a keratinocyte protein that first appears in the cell cytosol, but ultimately becomes cross-linked to membrane proteins by transglutaminase. All that results in the formation of an insoluble envelope beneath the plasma membrane. This chain is Small proline-rich protein 2F (Sprr2f), found in Mus musculus (Mouse).